Reading from the N-terminus, the 580-residue chain is Serine/threonine-protein kinase PINK1, mitochondrial (580 aa).

A mitochondrion-targeting transit peptide spans 1 to 77 (MAVRQALGRG…RFFRQSVAGL (77 aa)). The Mitochondrial intermembrane portion of the chain corresponds to 78–93 (AARIQRQFMVRARGGA). A helical transmembrane segment spans residues 94 to 110 (GPCGRAVFLAFGLGLGL). Residues 111–117 (IEEKQAE) form a required for outer membrane localization region. Over 111 to 580 (IEEKQAEGRR…LLLSSWRAAP (470 aa)) the chain is Cytoplasmic. In terms of domain architecture, Protein kinase spans 156-510 (YLIGQAIGKG…LAANVLHLSL (355 aa)). ATP is bound by residues 162-170 (IGKGCNAAV) and Lys-186. Ser-227 bears the Phosphoserine; by autocatalysis mark. The active-site Proton acceptor is Asp-361. Residue Ser-401 is modified to Phosphoserine; by autocatalysis.

This sequence belongs to the protein kinase superfamily. Ser/Thr protein kinase family. In terms of assembly, upon mitochondrial depolarization, it forms a supercomplex with TOM and TIM23 complexes. PINK1-TOM-TIM23 supercomplex formation requires PINK1 interaction with TOMM20 and TOMM70 and is critical for PINK1 stabilization at the outer mitochondrial membrane, kinase activation and downstream mitophagy. Upon mitochondrial depolarization, interacts with TIMM23; the interaction is required for PINK1 accumulation at the outer mitochondrial membrane, kinase activation by autophosphorylation and PRKN recruitement to mitochondria. Interacts with PRKN. Interacts with FBXO7. Forms a complex with PRKN and PARK7. Interacts with NENF. The cofactor is Mg(2+). Proteolytically cleaved. In healthy cells, the precursor is continuously imported into the inner mitochondrial membrane (IMM), where it is proteolytically cleaved by mitochondrial-processing peptidase (MPP) and then undergoes further proteolytic cleavage by PARL or AFG3L2 to give rise to the 52 kDa short form. The 52 kDa short form is then released into the cytosol where it rapidly undergoes proteasome-dependent degradation. In unhealthy cells, when cellular stress conditions lead to the loss of mitochondrial membrane potential, mitochondrial import is impaired leading to the precursor accumulating on the outer mitochondrial membrane (OMM). If accumulation at the OMM fails and it is imported into the depolarized mitochondria, it undergoes cleavage by the IMM protease OMA1, promoting its subsequent degradation by the proteasome. In terms of processing, autophosphorylated. Loss of mitochondrial membrane potential results in the precursor accumulating on the outer mitochondrial membrane (OMM) where it is activated by autophosphorylation. Autophosphorylation at Ser-227 and Ser-401 is essential for selective recruitment of PRKN to depolarized mitochondria, via PINK1-dependent phosphorylation of ubiquitin and PRKN. As to expression, high levels expressed in testis, lower levels in brain, heart, lung, liver and kidney.

It localises to the mitochondrion outer membrane. The protein localises to the mitochondrion inner membrane. Its subcellular location is the cytoplasm. It is found in the cytosol. It catalyses the reaction L-seryl-[protein] + ATP = O-phospho-L-seryl-[protein] + ADP + H(+). The enzyme catalyses L-threonyl-[protein] + ATP = O-phospho-L-threonyl-[protein] + ADP + H(+). Functionally, serine/threonine-protein kinase which acts as a sensor of mitochondrial damage and protects against mitochondrial dysfunction during cellular stress. It phosphorylates mitochondrial proteins to coordinate mitochondrial quality control mechanisms that remove and replace dysfunctional mitochondrial components. Depending on the severity of mitochondrial damage, activity ranges from preventing apoptosis and stimulating mitochondrial biogenesis to eliminating severely damaged mitochondria via PINK1-PRKN-dependent mitophagy. When cellular stress results in irreversible mitochondrial damage, PINK1 accumulates at the outer mitochondrial membrane (OMM) where it phosphorylates pre-existing polyubiquitin chains at 'Ser-65', recruits PRKN from the cytosol to the OMM and activates PRKN by phosphorylation at 'Ser-65'. Activated PRKN then ubiquinates VDAC1 and other OMM proteins to initiate mitophagy. The PINK1-PRKN pathway also promotes fission of damaged mitochondria by phosphorylating and thus promoting the PRKN-dependent degradation of mitochondrial proteins involved in fission such as MFN2. This prevents the refusion of unhealthy mitochondria with the mitochondrial network or initiates mitochondrial fragmentation facilitating their later engulfment by autophagosomes. Also promotes mitochondrial fission independently of PRKN and ATG7-mediated mitophagy, via the phosphorylation and activation of DNM1L. Regulates motility of damaged mitochondria by promoting the ubiquitination and subsequent degradation of MIRO1 and MIRO2; in motor neurons, this likely inhibits mitochondrial intracellular anterograde transport along the axons which probably increases the chance of the mitochondria undergoing mitophagy in the soma. Required for ubiquinone reduction by mitochondrial complex I by mediating phosphorylation of complex I subunit NDUFA10. Phosphorylates LETM1, positively regulating its mitochondrial calcium transport activity. The protein is Serine/threonine-protein kinase PINK1, mitochondrial (Pink1) of Mus musculus (Mouse).